The following is a 556-amino-acid chain: Phenylalanine--tRNA ligase beta subunit (556 aa).

The 76-residue stretch at 278–353 (LTPKRFEVEL…IAYGYNNIEP (76 aa)) folds into the B5 domain. Positions 331, 337, 340, and 341 each coordinate Mg(2+).

It belongs to the phenylalanyl-tRNA synthetase beta subunit family. Type 2 subfamily. In terms of assembly, tetramer of two alpha and two beta subunits. It depends on Mg(2+) as a cofactor.

It localises to the cytoplasm. The catalysed reaction is tRNA(Phe) + L-phenylalanine + ATP = L-phenylalanyl-tRNA(Phe) + AMP + diphosphate + H(+). This chain is Phenylalanine--tRNA ligase beta subunit, found in Pyrococcus abyssi (strain GE5 / Orsay).